Consider the following 245-residue polypeptide: Uridylate kinase (245 aa).

12 to 15 contributes to the ATP binding site; it reads KISG. Gly-55 lines the UMP pocket. ATP-binding residues include Gly-56 and Arg-60. UMP is bound by residues Asp-76 and 137–144; that span reads AGAPYLTT. ATP is bound by residues Thr-164, Tyr-171, and Asp-174.

This sequence belongs to the UMP kinase family. As to quaternary structure, homohexamer.

The protein resides in the cytoplasm. It catalyses the reaction UMP + ATP = UDP + ADP. It participates in pyrimidine metabolism; CTP biosynthesis via de novo pathway; UDP from UMP (UMPK route): step 1/1. Its activity is regulated as follows. Inhibited by UTP. In terms of biological role, catalyzes the reversible phosphorylation of UMP to UDP. This is Uridylate kinase from Chlamydia trachomatis serovar A (strain ATCC VR-571B / DSM 19440 / HAR-13).